The primary structure comprises 1505 residues: Anaphase-promoting complex subunit 1 (1505 aa).

This sequence belongs to the APC1 family. As to quaternary structure, the APC/C complex is probably composed of at least 12 subunits: apc-2, apc-10, apc-11, cdc-26, emb-1, emb-27, emb-30, mat-1, mat-2, mat-3, such-1 and gfi-3.

It functions in the pathway protein modification; protein ubiquitination. Probable component of the anaphase promoting complex/cyclosome (APC/C), a cell cycle-regulated E3 ubiquitin ligase that controls progression through mitosis and the G1 phase of the cell cycle. The APC/C complex acts by mediating ubiquitination and subsequent degradation of target proteins. Developmental role in early embryogenesis and the metaphase to anaphase transition in oocyte and spermatocyte meiosis and mitosis in germ cells. Required for embryonic anterior-posterior axis formation. Plays a role in regulating the abundance of glr-1 receptors in postmitotic neurons, which may in turn control animal locomotion. Involved in regulating GABA neurotransmitter release at neuromuscular junctions in GABA motor neurons. This Caenorhabditis elegans protein is Anaphase-promoting complex subunit 1.